Consider the following 229-residue polypeptide: Orotidine 5'-phosphate decarboxylase (229 aa).

Substrate is bound by residues aspartate 11, lysine 33, 61 to 70 (DMKLFDISAT), threonine 116, arginine 179, glutamine 188, glycine 208, and arginine 209. The Proton donor role is filled by lysine 63.

It belongs to the OMP decarboxylase family. Type 1 subfamily. In terms of assembly, homodimer.

The catalysed reaction is orotidine 5'-phosphate + H(+) = UMP + CO2. It participates in pyrimidine metabolism; UMP biosynthesis via de novo pathway; UMP from orotate: step 2/2. Functionally, catalyzes the decarboxylation of orotidine 5'-monophosphate (OMP) to uridine 5'-monophosphate (UMP). This chain is Orotidine 5'-phosphate decarboxylase, found in Jannaschia sp. (strain CCS1).